Reading from the N-terminus, the 98-residue chain is 10 kDa chaperonin (98 aa).

It belongs to the GroES chaperonin family. As to quaternary structure, forms stable complexes with CPN60 in the presence of ATP.

The protein resides in the cytoplasm. In terms of biological role, seems to function only as a co-chaperone, along with cpn60, and in certain cases is essential for the discharge of biologically active proteins from cpn60. The polypeptide is 10 kDa chaperonin (Brassica napus (Rape)).